Consider the following 224-residue polypeptide: Uracil-DNA glycosylase (224 aa).

Catalysis depends on aspartate 64, which acts as the Proton acceptor.

This sequence belongs to the uracil-DNA glycosylase (UDG) superfamily. UNG family.

Its subcellular location is the cytoplasm. The catalysed reaction is Hydrolyzes single-stranded DNA or mismatched double-stranded DNA and polynucleotides, releasing free uracil.. Its function is as follows. Excises uracil residues from the DNA which can arise as a result of misincorporation of dUMP residues by DNA polymerase or due to deamination of cytosine. The protein is Uracil-DNA glycosylase of Geobacillus sp. (strain WCH70).